Consider the following 399-residue polypeptide: Formate-dependent phosphoribosylglycinamide formyltransferase (399 aa).

Residues 8–9 (EL) and Glu68 contribute to the N(1)-(5-phospho-beta-D-ribosyl)glycinamide site. Residues Arg100, Lys141, 146 to 151 (SSGHGQ), 185 to 188 (EALA), and Glu193 contribute to the ATP site. The region spanning 105–308 (VLAHEELGLP…EFALHARAIL (204 aa)) is the ATP-grasp domain. Residues Glu266 and Glu279 each contribute to the Mg(2+) site. N(1)-(5-phospho-beta-D-ribosyl)glycinamide is bound by residues Asp286, Lys361, and 368–369 (RR).

This sequence belongs to the PurK/PurT family. In terms of assembly, homodimer.

It carries out the reaction N(1)-(5-phospho-beta-D-ribosyl)glycinamide + formate + ATP = N(2)-formyl-N(1)-(5-phospho-beta-D-ribosyl)glycinamide + ADP + phosphate + H(+). The protein operates within purine metabolism; IMP biosynthesis via de novo pathway; N(2)-formyl-N(1)-(5-phospho-D-ribosyl)glycinamide from N(1)-(5-phospho-D-ribosyl)glycinamide (formate route): step 1/1. Involved in the de novo purine biosynthesis. Catalyzes the transfer of formate to 5-phospho-ribosyl-glycinamide (GAR), producing 5-phospho-ribosyl-N-formylglycinamide (FGAR). Formate is provided by PurU via hydrolysis of 10-formyl-tetrahydrofolate. In Bifidobacterium adolescentis (strain ATCC 15703 / DSM 20083 / NCTC 11814 / E194a), this protein is Formate-dependent phosphoribosylglycinamide formyltransferase.